Reading from the N-terminus, the 259-residue chain is MINPIAFKLGPLSLHWYAVCILVGLLLAVYLAAKEAPRKKMTSDDIIDFILIAFPLAIIGARIYYVAFEWSYYSQHLSDIFAIWNGGIAIYGGLITGTIVLFVYCYYKVLNPIHFLDIAAPSVMLAQAIGRWGNFFNQEAYGRAVSQLNYLPSFIRQQMFIDGSYRVPTFLYESMWNLIGFVIIMVWRRKPRSLLDGDIISFYLIWYGCGRLVIEGMRTDSLMLLGIRVSQYVSVLLIIIAIVFIFKRHRQKGISYYQE.

The next 4 membrane-spanning stretches (helical) occupy residues 12–32 (LSLH…VYLA), 46–66 (IIDF…IYYV), 83–103 (IWNG…VLFV), and 109–129 (VLNP…AQAI). Arginine 131 lines the a 1,2-diacyl-sn-glycero-3-phospho-(1'-sn-glycerol) pocket. A run of 3 helical transmembrane segments spans residues 167 to 187 (VPTF…IMVW), 194 to 214 (LLDG…RLVI), and 226 to 246 (GIRV…VFIF).

The protein belongs to the Lgt family.

The protein resides in the cell membrane. The catalysed reaction is L-cysteinyl-[prolipoprotein] + a 1,2-diacyl-sn-glycero-3-phospho-(1'-sn-glycerol) = an S-1,2-diacyl-sn-glyceryl-L-cysteinyl-[prolipoprotein] + sn-glycerol 1-phosphate + H(+). The protein operates within protein modification; lipoprotein biosynthesis (diacylglyceryl transfer). Catalyzes the transfer of the diacylglyceryl group from phosphatidylglycerol to the sulfhydryl group of the N-terminal cysteine of a prolipoprotein, the first step in the formation of mature lipoproteins. In Streptococcus equi subsp. zooepidemicus (strain H70), this protein is Phosphatidylglycerol--prolipoprotein diacylglyceryl transferase.